A 5058-amino-acid polypeptide reads, in one-letter code: ATP-binding cassette sub-family A member 13 (5058 aa).

7 consecutive transmembrane segments (helical) span residues 23-43 (PVLFLAEFFWPCILFVILTVL), 3568-3588 (VGFFFPLIMMLTWMVSVASMV), 3607-3627 (GVHPVIHFLAWFLENMAVLTI), 3648-3668 (FIVFLFLLDFGMSVVMLSYLL), 3679-3699 (ALCTSLVYMISFLPYIVLLVL), 3709-3729 (TFLCLLSTTAFGQGVFFITFL), and 3752-3772 (FGWVCWMILFDSSLYFLCGWY). The ABC transporter 1 domain occupies 3842-4074 (VTLVSVTKEY…YGQGLRLTLT (233 aa)). 3875-3882 (GTNGAGKT) provides a ligand contact to ATP. The next 7 membrane-spanning stretches (helical) occupy residues 4226–4246 (TLADLLLPVLFVALAMGLFMV), 4458–4478 (VALCIVLGFSILSASIGSSVV), 4504–4524 (FLYDMLFYLVSVCLCVAVIVA), 4536–4556 (LAATALLLSLFGYATLPWMYL), 4568–4588 (FISYVSLNFIFGLCTMLITIM), 4607–4627 (VLKWVFTIFPQFCLGQGLVEL), and 4651–4671 (MNFLGWIFVQLASQGTVLLLL). In terms of domain architecture, ABC transporter 2 spans 4718–4956 (LVLYNLSKHY…FGDGYTVKVW (239 aa)). 4754–4761 (GVNGAGKS) serves as a coordination point for ATP.

It belongs to the ABC transporter superfamily. As to expression, significantly expressed in the bone marrow, trachea, testis, thyroid and lung as well as in skin fibroblasts.

The protein resides in the cytoplasmic vesicle membrane. The catalysed reaction is cholesterol(in) + ATP + H2O = cholesterol(out) + ADP + phosphate + H(+). Its function is as follows. May mediate the cholesterol and gangliosides transport from the plasma membrane to intracellular vesicles in an ATP hydrolysis dependent manner, thus playing a role in their internalization by endocytic retrograde transport and may also participate in the endocytosis of synaptic vesicle in cortical neurons. The polypeptide is ATP-binding cassette sub-family A member 13 (Homo sapiens (Human)).